A 247-amino-acid polypeptide reads, in one-letter code: MEWRDEGLIIGVRQYGEASVILEAMTRGHGRHLGLVRGGRSQRMRAVLQPGNSAELVWRARLDEQLGTWAIEPTQLRAATLMASAEALHAVGLICALLRLIAERDPHPDLYETAVLIAGHIGDERLAPLLVRLEIEILRETGFGLDLSRCAATGAREDLAYVSPKSGRAVSLAAGAPYRERLLPLPPFLRDEAPGGEPTPQDVLDGFGLTGFFLKRDVFTPRGQGMPEARRAYLAEFSKRQERSATE.

Belongs to the RecO family.

In terms of biological role, involved in DNA repair and RecF pathway recombination. The chain is DNA repair protein RecO from Methylocella silvestris (strain DSM 15510 / CIP 108128 / LMG 27833 / NCIMB 13906 / BL2).